The primary structure comprises 248 residues: Ribonuclease PH (248 aa).

Phosphate is bound by residues Arg86 and 124–126 (GTR).

This sequence belongs to the RNase PH family. Homohexameric ring arranged as a trimer of dimers.

It catalyses the reaction tRNA(n+1) + phosphate = tRNA(n) + a ribonucleoside 5'-diphosphate. Functionally, phosphorolytic 3'-5' exoribonuclease that plays an important role in tRNA 3'-end maturation. Removes nucleotide residues following the 3'-CCA terminus of tRNAs; can also add nucleotides to the ends of RNA molecules by using nucleoside diphosphates as substrates, but this may not be physiologically important. Probably plays a role in initiation of 16S rRNA degradation (leading to ribosome degradation) during starvation. In Listeria monocytogenes serotype 4b (strain CLIP80459), this protein is Ribonuclease PH.